The following is a 750-amino-acid chain: Photosystem I P700 chlorophyll a apoprotein A1 (750 aa).

A run of 8 helical transmembrane segments spans residues 70–93, 156–179, 195–219, 291–309, 346–369, 385–411, 433–455, and 531–549; these read VFSA…FHGA, LYCT…FHYH, LNHH…HVSL, IIHH…GHMY, WHAQ…HHMY, LSLF…IFMV, AIIS…LYIH, and FLVH…LILL. The [4Fe-4S] cluster site is built by cysteine 573 and cysteine 582. The next 2 helical transmembrane spans lie at 589–610 and 664–686; these read HVFL…HFSW and LSAY…MFLF. Histidine 675 provides a ligand contact to chlorophyll a'. The chlorophyll a site is built by methionine 683 and tyrosine 691. Phylloquinone is bound at residue tryptophan 692. The chain crosses the membrane as a helical span at residues 724–744; sequence AVGVTHYLLGGIATTWAFFLA.

It belongs to the PsaA/PsaB family. The PsaA/B heterodimer binds the P700 chlorophyll special pair and subsequent electron acceptors. PSI consists of a core antenna complex that captures photons, and an electron transfer chain that converts photonic excitation into a charge separation. The eukaryotic PSI reaction center is composed of at least 11 subunits. The cofactor is P700 is a chlorophyll a/chlorophyll a' dimer, A0 is one or more chlorophyll a, A1 is one or both phylloquinones and FX is a shared 4Fe-4S iron-sulfur center..

The protein localises to the plastid. The protein resides in the chloroplast thylakoid membrane. It catalyses the reaction reduced [plastocyanin] + hnu + oxidized [2Fe-2S]-[ferredoxin] = oxidized [plastocyanin] + reduced [2Fe-2S]-[ferredoxin]. In terms of biological role, psaA and PsaB bind P700, the primary electron donor of photosystem I (PSI), as well as the electron acceptors A0, A1 and FX. PSI is a plastocyanin-ferredoxin oxidoreductase, converting photonic excitation into a charge separation, which transfers an electron from the donor P700 chlorophyll pair to the spectroscopically characterized acceptors A0, A1, FX, FA and FB in turn. Oxidized P700 is reduced on the lumenal side of the thylakoid membrane by plastocyanin. In Phaseolus vulgaris (Kidney bean), this protein is Photosystem I P700 chlorophyll a apoprotein A1.